Here is a 366-residue protein sequence, read N- to C-terminus: Inactive protein RESTRICTED TEV MOVEMENT 2 (366 aa).

The sHSP domain maps to 14 to 121 (VQYEDFVPKS…LPETSRTEAA (108 aa)). One copy of the A-1 repeat lies at 129-133 (LEEKR). Positions 129-220 (LEEKRLLEES…LEERRLEERK (92 aa)) are 6 X 5 AA repeats A of L-E-E-[SKR]-[ERK]. An A-2 repeat occupies 135-139 (LEESR). Residues 156–160 (LEEKE) form an A-3 repeat. The B-1 repeat unit spans residues 163–176 (IRKLQEEAKAKEEA). Positions 163 to 206 (IRKLQEEAKAKEEAEMRKLQEEAKANEEAAAKKLQEEIEAKEKL) are 3 X 14 AA repeats B of [IMA]-[RK]-K-L-Q-E-E-A-K-A-K-E-[EK]-[LA]. One copy of the B-2 repeat lies at 178–191 (MRKLQEEAKANEEA). The B-3 repeat unit spans residues 193 to 205 (AKKLQEEIEAKEK). Residues 206–210 (LEERK) form an A-4 repeat. The stretch at 211-215 (LEERR) is one A-5 repeat. One copy of the A-6 repeat lies at 216–220 (LEERK). A helical membrane pass occupies residues 322–342 (LMMNVGVAALVIFALGAYVSY). The segment at 345–366 (CSSSSSSSSSSPSSSSSSTKPE) is disordered. The segment covering 346 to 366 (SSSSSSSSSSPSSSSSSTKPE) has biased composition (low complexity).

It belongs to the small heat shock protein (HSP20) family.

It is found in the cell membrane. Its function is as follows. Seems to not be involved in heat resistance. Unable to mediate restriction of long-distance movement of the pathogenic tobacco etch virus (TEV) without causing a hypersensitive response or inducing systemic acquired resistance. This is Inactive protein RESTRICTED TEV MOVEMENT 2 (RTM2) from Arabidopsis thaliana (Mouse-ear cress).